Reading from the N-terminus, the 61-residue chain is Phosphoenolpyruvate synthase (61 aa).

This sequence belongs to the PEP-utilizing enzyme family. Mg(2+) is required as a cofactor.

The catalysed reaction is pyruvate + ATP + H2O = phosphoenolpyruvate + AMP + phosphate + 2 H(+). It participates in carbohydrate biosynthesis; gluconeogenesis. Functionally, catalyzes the phosphorylation of pyruvate to phosphoenolpyruvate. The protein is Phosphoenolpyruvate synthase (ppsA) of Enterobacter agglomerans (Erwinia herbicola).